The sequence spans 203 residues: Glycerol-3-phosphate acyltransferase (203 aa).

4 helical membrane-spanning segments follow: residues 4 to 24, 68 to 88, 117 to 137, and 155 to 175; these read LALI…AVLI, IPVW…VIAI, PIGL…AVLF, and TWMF…LIVF.

The protein belongs to the PlsY family. In terms of assembly, probably interacts with PlsX.

The protein resides in the cell inner membrane. The catalysed reaction is an acyl phosphate + sn-glycerol 3-phosphate = a 1-acyl-sn-glycero-3-phosphate + phosphate. It participates in lipid metabolism; phospholipid metabolism. Catalyzes the transfer of an acyl group from acyl-phosphate (acyl-PO(4)) to glycerol-3-phosphate (G3P) to form lysophosphatidic acid (LPA). This enzyme utilizes acyl-phosphate as fatty acyl donor, but not acyl-CoA or acyl-ACP. The chain is Glycerol-3-phosphate acyltransferase from Vibrio campbellii (strain ATCC BAA-1116).